Here is a 371-residue protein sequence, read N- to C-terminus: Riboflavin biosynthesis protein RibD (371 aa).

Residues 1 to 122 (MEEYYMNTAI…MLEEAGIEVK (122 aa)) form the CMP/dCMP-type deaminase domain. The tract at residues 1–144 (MEEYYMNTAI…KMFLHFMRTG (144 aa)) is deaminase. Histidine 49 is a Zn(2+) binding site. Glutamate 51 serves as the catalytic Proton donor. Residues cysteine 74 and cysteine 83 each contribute to the Zn(2+) site. Residues 145–371 (LPYVTLKAAA…KDGDDVYRNR (227 aa)) form a reductase region. Residue alanine 153 participates in NADP(+) binding. Serine 167 contributes to the substrate binding site. Tryptophan 169 serves as a coordination point for NADP(+). Arginine 183 contributes to the substrate binding site. NADP(+)-binding residues include threonine 195 and aspartate 199. Residues leucine 203 and arginine 206 each contribute to the substrate site. Residue threonine 221 participates in NADP(+) binding. Glutamate 290 is a binding site for substrate. 292–298 (GASVHGS) serves as a coordination point for NADP(+).

In the N-terminal section; belongs to the cytidine and deoxycytidylate deaminase family. This sequence in the C-terminal section; belongs to the HTP reductase family. It depends on Zn(2+) as a cofactor.

The enzyme catalyses 2,5-diamino-6-hydroxy-4-(5-phosphoribosylamino)-pyrimidine + H2O + H(+) = 5-amino-6-(5-phospho-D-ribosylamino)uracil + NH4(+). It carries out the reaction 5-amino-6-(5-phospho-D-ribitylamino)uracil + NADP(+) = 5-amino-6-(5-phospho-D-ribosylamino)uracil + NADPH + H(+). Its pathway is cofactor biosynthesis; riboflavin biosynthesis; 5-amino-6-(D-ribitylamino)uracil from GTP: step 2/4. It functions in the pathway cofactor biosynthesis; riboflavin biosynthesis; 5-amino-6-(D-ribitylamino)uracil from GTP: step 3/4. In terms of biological role, converts 2,5-diamino-6-(ribosylamino)-4(3h)-pyrimidinone 5'-phosphate into 5-amino-6-(ribosylamino)-2,4(1h,3h)-pyrimidinedione 5'-phosphate. This Bacillus amyloliquefaciens (Bacillus velezensis) protein is Riboflavin biosynthesis protein RibD (ribD).